The chain runs to 146 residues: Snaclec rhodocytin subunit beta (146 aa).

The signal sequence occupies residues 1 to 23 (MGRFIFVSFGLLVVFLSLSGTGA). 3 disulfides stabilise this stretch: C25/C36, C53/C142, and C119/C134. One can recognise a C-type lectin domain in the interval 32 to 143 (YEGHCYKPFN…CSSTCSFVCK (112 aa)).

This sequence belongs to the snaclec family. As to quaternary structure, dimer (non-covalently linked) of heterodimers of subunits alpha and beta (disulfide-linked). In terms of tissue distribution, expressed by the venom gland.

It is found in the secreted. Functionally, elicits platelet aggregation by the binding to the C-type lectin domain family 1 member B (CLEC1B/CLEC2). Binding leads to tyrosine phosphorylation in the cytoplasmic tail of CLEC1B, which promotes the binding of spleen tyrosine kinase (Syk), subsequent activation of PLCgamma2, and platelet activation and aggregation. Binding to GPIbalpha (GP1BA) and alpha2/beta-1 (ITGA2/ITGB1) may also induce aggregation, but this is controversial. The polypeptide is Snaclec rhodocytin subunit beta (Calloselasma rhodostoma (Malayan pit viper)).